The chain runs to 237 residues: MLTCKQYELLLFIHNHMKEIGVPPSFDEMKIALELTSKSGIHRLITALEERGFIRRLPNRARAVEVVRLPEKITFNLSSARKISPNVIENNRRKISKNSKNLNNFDIEDKKNVTVPIMGRIAAGVPVSAIQQQTNTLCLPADMISLGEHYALEVKDDSMIEAGILDKDTIIVRRQNTATPGEIIIALIDKEEATLKRYRRNGASIALEAANPHYETRIYRPERIEIQGKLIGLIRKY.

Residues 26 to 46 (FDEMKIALELTSKSGIHRLIT) constitute a DNA-binding region (H-T-H motif). Residues Ser-158 and Lys-196 each act as for autocatalytic cleavage activity in the active site.

It belongs to the peptidase S24 family. As to quaternary structure, homodimer.

It carries out the reaction Hydrolysis of Ala-|-Gly bond in repressor LexA.. Its function is as follows. Represses a number of genes involved in the response to DNA damage (SOS response), including recA and lexA. In the presence of single-stranded DNA, RecA interacts with LexA causing an autocatalytic cleavage which disrupts the DNA-binding part of LexA, leading to derepression of the SOS regulon and eventually DNA repair. The chain is LexA repressor from Bartonella quintana (strain Toulouse) (Rochalimaea quintana).